The chain runs to 215 residues: Small ribosomal subunit protein uS3 (215 aa).

The KH type-2 domain occupies 39–107 (VRQYLQKRLA…PVHINIEEIR (69 aa)).

Belongs to the universal ribosomal protein uS3 family. In terms of assembly, part of the 30S ribosomal subunit. Forms a tight complex with proteins S10 and S14.

Binds the lower part of the 30S subunit head. Binds mRNA in the 70S ribosome, positioning it for translation. The polypeptide is Small ribosomal subunit protein uS3 (Nitrosomonas eutropha (strain DSM 101675 / C91 / Nm57)).